Reading from the N-terminus, the 74-residue chain is Brevinin-2Ta (74 aa).

The signal sequence occupies residues 1–22; it reads MFTMKKSLLLFFFLGTISLSLC. Residues 23–41 constitute a propeptide that is removed on maturation; that stretch reads QEERNADEDDGEMTEEEKR. An intrachain disulfide couples C68 to C74.

It belongs to the frog skin active peptide (FSAP) family. Brevinin subfamily. As to expression, expressed by the skin glands.

The protein localises to the secreted. Its function is as follows. Antimicrobial peptide. This Rana temporaria (European common frog) protein is Brevinin-2Ta.